Here is a 74-residue protein sequence, read N- to C-terminus: Mu-conotoxin-like T3.1 (74 aa).

A signal peptide spans 1–19 (MSKLGVLLTICLLLFPLTA). The propeptide occupies 20 to 74 (LPMDGDEPADRPAERMQDNISSEQHPLFEERHGCCKGPEGCSSRECRPQHCCGRR). 3 disulfide bridges follow: Cys53-Cys65, Cys54-Cys70, and Cys60-Cys71. Pro57 carries the 4-hydroxyproline modification. A 4-carboxyglutamate mark is found at Glu58 and Glu64. At Pro67 the chain carries 4-hydroxyproline. Residue Cys71 is modified to Cysteine amide.

The protein belongs to the conotoxin M superfamily. In terms of tissue distribution, expressed by the venom duct.

Its subcellular location is the secreted. In terms of biological role, mu-conotoxins block voltage-gated sodium channels (Nav). In vitro, this synthetic peptide displays a low blocking effect in mouse extensor digitorum longus muscles (IC(50)=616 nM). The protein is Mu-conotoxin-like T3.1 of Conus tulipa (Fish-hunting cone snail).